A 122-amino-acid chain; its full sequence is Large ribosomal subunit protein bL12 (122 aa).

The protein belongs to the bacterial ribosomal protein bL12 family. As to quaternary structure, homodimer. Part of the ribosomal stalk of the 50S ribosomal subunit. Forms a multimeric L10(L12)X complex, where L10 forms an elongated spine to which 2 to 4 L12 dimers bind in a sequential fashion. Binds GTP-bound translation factors.

Its function is as follows. Forms part of the ribosomal stalk which helps the ribosome interact with GTP-bound translation factors. Is thus essential for accurate translation. The sequence is that of Large ribosomal subunit protein bL12 from Stutzerimonas stutzeri (strain A1501) (Pseudomonas stutzeri).